We begin with the raw amino-acid sequence, 449 residues long: Hyaluronidase (449 aa).

Residues 1 to 23 form the signal peptide; sequence MYHLWIKCLAAWIFLKRFNGVHV. 2 cysteine pairs are disulfide-bonded: cysteine 47-cysteine 340 and cysteine 211-cysteine 227. 2 N-linked (GlcNAc...) asparagine glycosylation sites follow: asparagine 67 and asparagine 103. Residue glutamate 135 is the Proton donor of the active site. N-linked (GlcNAc...) asparagine glycosylation is present at asparagine 153. N-linked (GlcNAc...) asparagine glycosylation occurs at asparagine 357. 3 cysteine pairs are disulfide-bonded: cysteine 365–cysteine 376, cysteine 370–cysteine 427, and cysteine 429–cysteine 438. Asparagine 401 carries N-linked (GlcNAc...) asparagine glycosylation. In terms of domain architecture, EGF-like spans 427–438; sequence CQCYQGWQGLYC.

The protein belongs to the glycosyl hydrolase 56 family. As to quaternary structure, monomer. As to expression, expressed by the venom gland.

Its subcellular location is the secreted. The enzyme catalyses Random hydrolysis of (1-&gt;4)-linkages between N-acetyl-beta-D-glucosamine and D-glucuronate residues in hyaluronate.. Functionally, snake venom endo-hyaluronidase that degrades hyaluronan to smaller oligosaccharide fragments. In venom, it is not toxic by itself, but increases the diffusion of other venom proteins by degrading the extracellular matrix. In addition, it displays antiedematogenic activity. The polypeptide is Hyaluronidase (Echis ocellatus (Ocellated saw-scaled viper)).